We begin with the raw amino-acid sequence, 103 residues long: V-type sodium ATPase subunit G (103 aa).

It belongs to the V-ATPase F subunit family.

Functionally, involved in ATP-driven sodium extrusion. This is V-type sodium ATPase subunit G (ntpG) from Enterococcus hirae (strain ATCC 9790 / DSM 20160 / JCM 8729 / LMG 6399 / NBRC 3181 / NCIMB 6459 / NCDO 1258 / NCTC 12367 / WDCM 00089 / R).